An 877-amino-acid polypeptide reads, in one-letter code: Phosphoenolpyruvate carboxylase (877 aa).

Catalysis depends on residues histidine 137 and lysine 542.

It belongs to the PEPCase type 1 family. It depends on Mg(2+) as a cofactor.

The catalysed reaction is oxaloacetate + phosphate = phosphoenolpyruvate + hydrogencarbonate. Forms oxaloacetate, a four-carbon dicarboxylic acid source for the tricarboxylic acid cycle. The sequence is that of Phosphoenolpyruvate carboxylase from Tolumonas auensis (strain DSM 9187 / NBRC 110442 / TA 4).